Consider the following 253-residue polypeptide: 5'/3'-nucleotidase SurE (253 aa).

The a divalent metal cation site is built by aspartate 8, aspartate 9, serine 39, and asparagine 92.

This sequence belongs to the SurE nucleotidase family. Requires a divalent metal cation as cofactor.

It localises to the cytoplasm. It carries out the reaction a ribonucleoside 5'-phosphate + H2O = a ribonucleoside + phosphate. The enzyme catalyses a ribonucleoside 3'-phosphate + H2O = a ribonucleoside + phosphate. The catalysed reaction is [phosphate](n) + H2O = [phosphate](n-1) + phosphate + H(+). Functionally, nucleotidase with a broad substrate specificity as it can dephosphorylate various ribo- and deoxyribonucleoside 5'-monophosphates and ribonucleoside 3'-monophosphates with highest affinity to 3'-AMP. Also hydrolyzes polyphosphate (exopolyphosphatase activity) with the preference for short-chain-length substrates (P20-25). Might be involved in the regulation of dNTP and NTP pools, and in the turnover of 3'-mononucleotides produced by numerous intracellular RNases (T1, T2, and F) during the degradation of various RNAs. In Shigella dysenteriae serotype 1 (strain Sd197), this protein is 5'/3'-nucleotidase SurE.